The following is a 351-amino-acid chain: Phenylalanine--tRNA ligase alpha subunit (351 aa).

The interval 45–69 (LGDDAPIPAARRSLGSLPKDQRKDA) is disordered. Glu269 contacts Mg(2+).

Belongs to the class-II aminoacyl-tRNA synthetase family. Phe-tRNA synthetase alpha subunit type 1 subfamily. As to quaternary structure, tetramer of two alpha and two beta subunits. Mg(2+) serves as cofactor.

The protein resides in the cytoplasm. It carries out the reaction tRNA(Phe) + L-phenylalanine + ATP = L-phenylalanyl-tRNA(Phe) + AMP + diphosphate + H(+). The polypeptide is Phenylalanine--tRNA ligase alpha subunit (Corynebacterium jeikeium (strain K411)).